A 465-amino-acid chain; its full sequence is 3-isopropylmalate dehydratase large subunit (465 aa).

Residues C346, C406, and C409 each contribute to the [4Fe-4S] cluster site.

The protein belongs to the aconitase/IPM isomerase family. LeuC type 1 subfamily. Heterodimer of LeuC and LeuD. The cofactor is [4Fe-4S] cluster.

It carries out the reaction (2R,3S)-3-isopropylmalate = (2S)-2-isopropylmalate. It participates in amino-acid biosynthesis; L-leucine biosynthesis; L-leucine from 3-methyl-2-oxobutanoate: step 2/4. In terms of biological role, catalyzes the isomerization between 2-isopropylmalate and 3-isopropylmalate, via the formation of 2-isopropylmaleate. In Psychromonas ingrahamii (strain DSM 17664 / CCUG 51855 / 37), this protein is 3-isopropylmalate dehydratase large subunit.